A 234-amino-acid polypeptide reads, in one-letter code: Small ribosomal subunit protein uS3 (234 aa).

In terms of domain architecture, KH type-2 spans 39-107; sequence IRKMLKERLK…EVHLNLVEVR (69 aa). Residues 215–227 show a composition bias toward basic and acidic residues; the sequence is QERRLQESGEQRA. Residues 215–234 form a disordered region; sequence QERRLQESGEQRARSGRQAA.

The protein belongs to the universal ribosomal protein uS3 family. Part of the 30S ribosomal subunit. Forms a tight complex with proteins S10 and S14.

In terms of biological role, binds the lower part of the 30S subunit head. Binds mRNA in the 70S ribosome, positioning it for translation. This is Small ribosomal subunit protein uS3 from Maricaulis maris (strain MCS10) (Caulobacter maris).